The following is a 184-amino-acid chain: Exosome complex protein LRP1 (184 aa).

Positions 157-184 (DSTDHIRKASSKKSKRLDKVGKKKGGKK) are disordered. Over residues 164–184 (KASSKKSKRLDKVGKKKGGKK) the composition is skewed to basic residues.

Belongs to the C1D family. Associates with nuclear form of the RNA exosome complex. Interacts with RRP4, RRP6, RRP45 and RRP46.

It localises to the nucleus. In terms of biological role, required for exosome-dependent processing of pre-rRNA and small nucleolar RNA (snRNA) precursors. Involved in processing of 35S pre-rRNA at the A0, A1 and A2 sites. Required for activity of RRP6 in 7S pre-rRNA processing. Also has a role in 3'-processing of U4 and U5 small nuclear RNAs (snRNAs). Acts as a mRNA export factor. Mediates mRNA degradation upon UV irradiation. Maintains genome integrity where it is involved in both non-homologous end joining (NHEJ) and homologous recombination pathway repair of double strand DNA breaks. During NHEJ, required for joining 3'-overhanging ends. Also involved in telomere length regulation and maintenance. The polypeptide is Exosome complex protein LRP1 (LRP1) (Saccharomyces cerevisiae (strain ATCC 204508 / S288c) (Baker's yeast)).